The sequence spans 255 residues: MAVISMKQLLEAGVHFGHQTRRWNPKMAKYIFTERNGIHVIDLQQTVKMVDTAYEFVREAAANDAVILFVGTKKQAAEAVAEEATRAGQYYINHRWLGGTLTNWNTIKKRIARLKEIKQMEADGTFEVLPKKEVALLNKQRARLEKFLGGIEDMPRIPDVIYIVDPHKEQIAVKEAKKLGIPVVAMVDTNADPDEIDVIIPANDDAIRAVKLITSKMADAIIEGKQGEDASVDFQEAAAADSIEEIVEVVEGDNN.

This sequence belongs to the universal ribosomal protein uS2 family.

The chain is Small ribosomal subunit protein uS2 from Streptococcus thermophilus (strain ATCC BAA-491 / LMD-9).